A 427-amino-acid chain; its full sequence is Serine--tRNA ligase (427 aa).

An L-serine-binding site is contributed by 236–238 (TAE). 267–269 (RRE) contacts ATP. Glutamate 290 provides a ligand contact to L-serine. ATP is bound at residue 354–357 (EISS). Serine 390 contacts L-serine.

Belongs to the class-II aminoacyl-tRNA synthetase family. Type-1 seryl-tRNA synthetase subfamily. In terms of assembly, homodimer. The tRNA molecule binds across the dimer.

It is found in the cytoplasm. It carries out the reaction tRNA(Ser) + L-serine + ATP = L-seryl-tRNA(Ser) + AMP + diphosphate + H(+). The catalysed reaction is tRNA(Sec) + L-serine + ATP = L-seryl-tRNA(Sec) + AMP + diphosphate + H(+). Its pathway is aminoacyl-tRNA biosynthesis; selenocysteinyl-tRNA(Sec) biosynthesis; L-seryl-tRNA(Sec) from L-serine and tRNA(Sec): step 1/1. Functionally, catalyzes the attachment of serine to tRNA(Ser). Is also able to aminoacylate tRNA(Sec) with serine, to form the misacylated tRNA L-seryl-tRNA(Sec), which will be further converted into selenocysteinyl-tRNA(Sec). In Rippkaea orientalis (strain PCC 8801 / RF-1) (Cyanothece sp. (strain PCC 8801)), this protein is Serine--tRNA ligase.